Here is a 434-residue protein sequence, read N- to C-terminus: Trigger factor (434 aa).

The region spanning 160–245 is the PPIase FKBP-type domain; the sequence is GDKVKMNFVG…LTEVLAANLP (86 aa).

It belongs to the FKBP-type PPIase family. Tig subfamily.

The protein localises to the cytoplasm. It catalyses the reaction [protein]-peptidylproline (omega=180) = [protein]-peptidylproline (omega=0). Functionally, involved in protein export. Acts as a chaperone by maintaining the newly synthesized protein in an open conformation. Functions as a peptidyl-prolyl cis-trans isomerase. This is Trigger factor from Shewanella sp. (strain ANA-3).